A 335-amino-acid chain; its full sequence is L-tyrosine isonitrile synthase (335 aa).

This sequence belongs to the isocyanide synthase family.

The catalysed reaction is D-ribulose 5-phosphate + L-tyrosine = (2S)-3-(4-hydroxyphenyl)-2-isocyanopropanoate + hydroxyacetone + formaldehyde + phosphate + H2O + H(+). Its function is as follows. Involved in the biosynthesis of rhabduscin, a tyrosine derivative which is a potent inhibitor of phenoloxidase, a key component of the insect's innate immune system. Responsible for the synthesis of the isonitrile group on tyrosine using the C2 of ribulose 5-phosphate as the source of the carbon atom. The protein is L-tyrosine isonitrile synthase of Xenorhabdus nematophila (strain ATCC 19061 / DSM 3370 / CCUG 14189 / LMG 1036 / NCIMB 9965 / AN6).